The sequence spans 824 residues: Sphingomyelin phosphodiesterase 4 (824 aa).

Residues 777-797 (LAFLFIFYILGSLLSLGPLIC) form a helical membrane-spanning segment.

Mg(2+) is required as a cofactor.

Its subcellular location is the endoplasmic reticulum membrane. The protein localises to the golgi apparatus membrane. The protein resides in the nucleus envelope. It localises to the cell membrane. It is found in the sarcolemma. It catalyses the reaction a sphingomyelin + H2O = phosphocholine + an N-acylsphing-4-enine + H(+). Functionally, catalyzes the hydrolysis of membrane sphingomyelin to form phosphorylcholine and ceramide. It has a relevant role in the homeostasis of membrane sphingolipids, thereby influencing membrane integrity, and endoplasmic reticulum organization and function. May sensitize cells to DNA damage-induced apoptosis. This Xenopus laevis (African clawed frog) protein is Sphingomyelin phosphodiesterase 4 (smpd4).